The chain runs to 305 residues: Mitochondrial thiamine pyrophosphate carrier 1 (305 aa).

Transmembrane regions (helical) follow at residues 16 to 32 (VSPYESLLAGSISGAVA), 84 to 100 (ILYVLYGAAQFTTYSSI), 122 to 142 (LVSGTGAGVVSTLVTYPFDLL), 169 to 193 (GFTGLFAGIKPAMLSISTTTGLMFW), 213 to 229 (ICGFIAGATSKGITFPL), and 270 to 287 (GFGISVLKTSPTSAVSLF). 3 Solcar repeats span residues 16 to 103 (VSPY…ISRW), 116 to 201 (PSSA…VRET), and 206 to 295 (DIPF…SLAA).

Belongs to the mitochondrial carrier (TC 2.A.29) family.

It localises to the mitochondrion inner membrane. Mitochondrial transporter that mediates uptake of thiamine pyrophosphate (ThPP) into mitochondria. This is Mitochondrial thiamine pyrophosphate carrier 1 (TPC1) from Scheffersomyces stipitis (strain ATCC 58785 / CBS 6054 / NBRC 10063 / NRRL Y-11545) (Yeast).